Consider the following 151-residue polypeptide: tRNA-specific adenosine deaminase (151 aa).

The CMP/dCMP-type deaminase domain occupies 1–111; sequence MGKEYFLKVA…LDKKHGGVVS (111 aa). Residue His-52 participates in Zn(2+) binding. The Proton donor role is filled by Glu-54. Zn(2+)-binding residues include Cys-82 and Cys-85.

This sequence belongs to the cytidine and deoxycytidylate deaminase family. Homodimer. Requires Zn(2+) as cofactor.

The catalysed reaction is adenosine(34) in tRNA + H2O + H(+) = inosine(34) in tRNA + NH4(+). Its function is as follows. Catalyzes the deamination of adenosine to inosine at the wobble position 34 of tRNA(Arg2). The sequence is that of tRNA-specific adenosine deaminase from Aquifex aeolicus (strain VF5).